A 520-amino-acid chain; its full sequence is GMP synthase [glutamine-hydrolyzing] (520 aa).

A Glutamine amidotransferase type-1 domain is found at 9-202 (SVLIVDFGSQ…IHNIAGIKGD (194 aa)). Cys-86 acts as the Nucleophile in catalysis. Residues His-176 and Glu-178 contribute to the active site. In terms of domain architecture, GMPS ATP-PPase spans 203–395 (WSMSAYRQKA…LGLPDSFIGR (193 aa)). Residue 230 to 236 (SGGVDSS) participates in ATP binding.

Homodimer.

It carries out the reaction XMP + L-glutamine + ATP + H2O = GMP + L-glutamate + AMP + diphosphate + 2 H(+). It functions in the pathway purine metabolism; GMP biosynthesis; GMP from XMP (L-Gln route): step 1/1. Functionally, catalyzes the synthesis of GMP from XMP. This is GMP synthase [glutamine-hydrolyzing] from Rhizobium johnstonii (strain DSM 114642 / LMG 32736 / 3841) (Rhizobium leguminosarum bv. viciae).